The chain runs to 68 residues: Antimicrobial peptide UyCT5 (68 aa).

A signal peptide spans 1 to 23 (MKNQFAILLLAVVFLQLISQSDA). The residue at position 36 (Leu-36) is a Leucine amide. Residues 40–68 (GLKNADRLDELFDGDISDADLDFLRELMR) constitute a propeptide that is removed on maturation.

This sequence belongs to the non-disulfide-bridged peptide (NDBP) superfamily. Short antimicrobial peptide (group 4) family. As to expression, expressed by the venom gland.

It localises to the secreted. The protein localises to the target cell membrane. Its function is as follows. Antimicrobial peptide that inhibits the growth of Gram-positive (S.aureus, MIC=1 uM) and Gram-negative bacteria (E.coli, MIC=15 uM and P.aeruginosa, MIC=2 uM). It also shows 37% of hemolysis when 15 uM are tested (93% at 50 uM). This is Antimicrobial peptide UyCT5 from Urodacus yaschenkoi (Inland robust scorpion).